The chain runs to 255 residues: ATP synthase subunit a (255 aa).

The next 6 helical transmembrane spans lie at 28-48, 86-106, 125-145, 164-184, 203-223, and 224-244; these read VDSL…FWLG, IAPL…MDLV, ILPT…FFLI, FHPF…IELI, LIFI…GTPW, and AIFH…LTVV.

It belongs to the ATPase A chain family. In terms of assembly, F-type ATPases have 2 components, CF(1) - the catalytic core - and CF(0) - the membrane proton channel. CF(1) has five subunits: alpha(3), beta(3), gamma(1), delta(1), epsilon(1). CF(0) has three main subunits: a(1), b(2) and c(9-12). The alpha and beta chains form an alternating ring which encloses part of the gamma chain. CF(1) is attached to CF(0) by a central stalk formed by the gamma and epsilon chains, while a peripheral stalk is formed by the delta and b chains.

It localises to the cell inner membrane. Its function is as follows. Key component of the proton channel; it plays a direct role in the translocation of protons across the membrane. In Alkalilimnicola ehrlichii (strain ATCC BAA-1101 / DSM 17681 / MLHE-1), this protein is ATP synthase subunit a.